A 186-amino-acid polypeptide reads, in one-letter code: Dirigent protein 4 (186 aa).

Residues 1-20 (MGKNLGLVVSFYLCITFALG) form the signal peptide. N-linked (GlcNAc...) asparagine glycans are attached at residues Asn-67, Asn-126, Asn-169, and Asn-180.

It belongs to the plant dirigent protein family. As to quaternary structure, homodimer.

It localises to the secreted. It is found in the extracellular space. The protein resides in the apoplast. Its function is as follows. Dirigent proteins impart stereoselectivity on the phenoxy radical-coupling reaction, yielding optically active lignans from two molecules of coniferyl alcohol in the biosynthesis of lignans, flavonolignans, and alkaloids and thus plays a central role in plant secondary metabolism. This chain is Dirigent protein 4 (DIR4), found in Arabidopsis thaliana (Mouse-ear cress).